Here is a 45-residue protein sequence, read N- to C-terminus: Thymosin beta-15A (45 aa).

Basic and acidic residues-rich tracts occupy residues 1-27 (MSDKPDLSEVEKFDRSKLKKTNTEEKN) and 35-45 (IQQEKECVQTS). A disordered region spans residues 1 to 45 (MSDKPDLSEVEKFDRSKLKKTNTEEKNTLPSKETIQQEKECVQTS).

This sequence belongs to the thymosin beta family. In terms of tissue distribution, neuroblastoma-specific.

Its subcellular location is the cytoplasm. It localises to the cytoskeleton. Its function is as follows. Plays an important role in the organization of the cytoskeleton. Binds to and sequesters actin monomers (G actin) and therefore inhibits actin polymerization. This chain is Thymosin beta-15A (TMSB15A), found in Homo sapiens (Human).